Reading from the N-terminus, the 253-residue chain is Ciliary microtubule associated protein 1B (253 aa).

The STPGR repeat unit spans residues 182–207 (PGPCAYQVVSPGVYKSRAPQFTILAR).

This sequence belongs to the CIMAP family.

It is found in the cell projection. It localises to the cilium. Its subcellular location is the flagellum. The protein is Ciliary microtubule associated protein 1B of Homo sapiens (Human).